Consider the following 418-residue polypeptide: Protein fuzzy homolog (418 aa).

This sequence belongs to the fuzzy family. Component of the CPLANE (ciliogenesis and planar polarity effectors) complex, composed of INTU, FUZ and WDPCP. Interacts with CPLANE2. Interacts with CPLANE1.

The protein localises to the cytoplasm. It is found in the cytoskeleton. It localises to the cilium basal body. Probable planar cell polarity effector involved in cilium biogenesis. May regulate protein and membrane transport to the cilium. Proposed to function as core component of the CPLANE (ciliogenesis and planar polarity effectors) complex involved in the recruitment of peripheral IFT-A proteins to basal bodies. May regulate the morphogenesis of hair follicles which depends on functional primary cilia. Binds phosphatidylinositol 3-phosphate with highest affinity, followed by phosphatidylinositol 4-phosphate and phosphatidylinositol 5-phosphate. The sequence is that of Protein fuzzy homolog (FUZ) from Homo sapiens (Human).